The sequence spans 213 residues: MKVVLMGPPGAGKGTQARKISEKYGIPQLSTGDMLRAAVAAGSEVGLRAKAAMESGSLVTDEIVLGIIQDRTDEADCDQGYLLDGFPRTLAQAEGLDAMLAKRNQSIDVVIDIKVEDEPLVARITGRSSCEKCGEGYHDSFKPSAQPNVCDKCSGTLKRRADDNADTVRNRLEVYHKQTAPLIGYYDAKGLLKEVDGMQEMGKVLEDLCAILG.

An ATP-binding site is contributed by 10–15 (GAGKGT). The segment at 30-59 (STGDMLRAAVAAGSEVGLRAKAAMESGSLV) is NMP. AMP-binding positions include threonine 31, arginine 36, 57-59 (SLV), 85-88 (GFPR), and glutamine 92. Residues 126-163 (GRSSCEKCGEGYHDSFKPSAQPNVCDKCSGTLKRRADD) form an LID region. Residue arginine 127 participates in ATP binding. The Zn(2+) site is built by cysteine 130, cysteine 133, cysteine 150, and cysteine 153. Residues arginine 160 and arginine 171 each coordinate AMP. An ATP-binding site is contributed by glutamine 199.

The protein belongs to the adenylate kinase family. Monomer.

Its subcellular location is the cytoplasm. The enzyme catalyses AMP + ATP = 2 ADP. It participates in purine metabolism; AMP biosynthesis via salvage pathway; AMP from ADP: step 1/1. In terms of biological role, catalyzes the reversible transfer of the terminal phosphate group between ATP and AMP. Plays an important role in cellular energy homeostasis and in adenine nucleotide metabolism. The protein is Adenylate kinase of Magnetococcus marinus (strain ATCC BAA-1437 / JCM 17883 / MC-1).